Here is a 206-residue protein sequence, read N- to C-terminus: Large ribosomal subunit protein uL4 (206 aa).

The segment at 43–78 is disordered; the sequence is ARSGNRKQKDREEVKHTTKKPWRQKGTGRARAGMSS. The span at 49 to 58 shows a compositional bias: basic and acidic residues; that stretch reads KQKDREEVKH. The segment covering 59–70 has biased composition (basic residues); that stretch reads TTKKPWRQKGTG.

Belongs to the universal ribosomal protein uL4 family. Part of the 50S ribosomal subunit.

In terms of biological role, one of the primary rRNA binding proteins, this protein initially binds near the 5'-end of the 23S rRNA. It is important during the early stages of 50S assembly. It makes multiple contacts with different domains of the 23S rRNA in the assembled 50S subunit and ribosome. Forms part of the polypeptide exit tunnel. The protein is Large ribosomal subunit protein uL4 of Ralstonia nicotianae (strain ATCC BAA-1114 / GMI1000) (Ralstonia solanacearum).